A 97-amino-acid chain; its full sequence is Large ribosomal subunit protein eL21 (97 aa).

This sequence belongs to the eukaryotic ribosomal protein eL21 family.

The protein is Large ribosomal subunit protein eL21 of Methanococcus aeolicus (strain ATCC BAA-1280 / DSM 17508 / OCM 812 / Nankai-3).